We begin with the raw amino-acid sequence, 366 residues long: Galactoside alpha-(1,2)-fucosyltransferase 1 (366 aa).

Topologically, residues 1 to 8 (MWPPSHRQ) are cytoplasmic. The chain crosses the membrane as a helical; Signal-anchor for type II membrane protein span at residues 9-25 (LCLAFLLVCVLSVISFF). The Lumenal portion of the chain corresponds to 26 to 366 (LHIHQDSFPH…LSSLWTLAKP (341 aa)). N-linked (GlcNAc...) asparagine glycans are attached at residues Asn-66, Asn-302, and Asn-328.

The protein belongs to the glycosyltransferase 11 family.

It is found in the golgi apparatus. Its subcellular location is the golgi stack membrane. It catalyses the reaction a beta-D-galactosyl-(1-&gt;4)-N-acetyl-beta-D-glucosaminyl derivative + GDP-beta-L-fucose = an alpha-L-Fuc-(1-&gt;2)-beta-D-Gal-(1-&gt;4)-beta-D-GlcNAc derivative + GDP + H(+). It carries out the reaction a ganglioside GA1 + GDP-beta-L-fucose = a ganglioside Fuc-GA1 + GDP + H(+). The catalysed reaction is a beta-D-Gal-(1-&gt;3)-beta-D-GlcNAc-(1-&gt;3)-beta-D-Gal-(1-&gt;4)-beta-D-Glc-(1&lt;-&gt;1')-Cer(d18:1(4E)) + GDP-beta-L-fucose = alpha-L-fucosyl-(1-&gt;2)- beta-D-galactosyl-(1-&gt;3)-N-acetyl-beta-D-glucosaminyl-(1-&gt;3)-beta-D-galactosyl-(1-&gt;4)-beta-D-glucosyl-(1&lt;-&gt;1')-N-acylsphing-4-enine + GDP + H(+). The enzyme catalyses a neolactoside nLc4Cer(d18:1(4E)) + GDP-beta-L-fucose = a neolactoside IV(2)-alpha-Fuc-nLc4Cer(d18:1(4E)) + GDP + H(+). It catalyses the reaction a ganglioside GM1 + GDP-beta-L-fucose = a ganglioside Fuc-GM1 + GDP + H(+). It carries out the reaction beta-D-galactosyl-(1-&gt;3)-N-acetyl-D-galactosamine + GDP-beta-L-fucose = alpha-L-fucosyl-(1-&gt;2)-beta-D-galactosyl-(1-&gt;3)-N-acetyl-D-galactosamine + GDP + H(+). Its pathway is protein modification; protein glycosylation. Its function is as follows. Catalyzes the transfer of L-fucose, from a guanosine diphosphate-beta-L-fucose, to the terminal galactose residue of glycoconjugates through an alpha(1,2) linkage leading to H antigen synthesis that is an intermediate substrate in the synthesis of ABO blood group antigens. H antigen is essential for maturation of the glomerular layer of the main olfactory bulb, in cell migration and early cell-cell contacts during tumor associated angiogenesis. Preferentially fucosylates soluble lactose and to a lesser extent fucosylates glycolipids gangliosides GA1 and GM1a. This chain is Galactoside alpha-(1,2)-fucosyltransferase 1, found in Pan troglodytes (Chimpanzee).